A 572-amino-acid polypeptide reads, in one-letter code: Arginine--tRNA ligase (572 aa).

The 'HIGH' region motif lies at 122–132; the sequence is PNLAKEMHVGH.

It belongs to the class-I aminoacyl-tRNA synthetase family. In terms of assembly, monomer.

It is found in the cytoplasm. It carries out the reaction tRNA(Arg) + L-arginine + ATP = L-arginyl-tRNA(Arg) + AMP + diphosphate. This is Arginine--tRNA ligase from Neisseria gonorrhoeae (strain NCCP11945).